We begin with the raw amino-acid sequence, 195 residues long: Imidazoleglycerol-phosphate dehydratase (195 aa).

The protein belongs to the imidazoleglycerol-phosphate dehydratase family.

It is found in the cytoplasm. It catalyses the reaction D-erythro-1-(imidazol-4-yl)glycerol 3-phosphate = 3-(imidazol-4-yl)-2-oxopropyl phosphate + H2O. Its pathway is amino-acid biosynthesis; L-histidine biosynthesis; L-histidine from 5-phospho-alpha-D-ribose 1-diphosphate: step 6/9. The protein is Imidazoleglycerol-phosphate dehydratase of Geobacillus thermodenitrificans (strain NG80-2).